The sequence spans 108 residues: Tetrahydromethanopterin S-methyltransferase subunit B (108 aa).

The chain crosses the membrane as a helical span at residues 80–100; the sequence is AFYGIVVGLAFSGLLALIIFI.

Belongs to the MtrB family. As to quaternary structure, the complex is composed of 8 subunits; MtrA, MtrB, MtrC, MtrD, MtrE, MtrF, MtrG and MtrH.

The protein localises to the cell membrane. It carries out the reaction 5-methyl-5,6,7,8-tetrahydromethanopterin + coenzyme M + 2 Na(+)(in) = 5,6,7,8-tetrahydromethanopterin + methyl-coenzyme M + 2 Na(+)(out). The protein operates within one-carbon metabolism; methanogenesis from CO(2); methyl-coenzyme M from 5,10-methylene-5,6,7,8-tetrahydromethanopterin: step 2/2. Its function is as follows. Part of a complex that catalyzes the formation of methyl-coenzyme M and tetrahydromethanopterin from coenzyme M and methyl-tetrahydromethanopterin. This is an energy-conserving, sodium-ion translocating step. The polypeptide is Tetrahydromethanopterin S-methyltransferase subunit B (Methanosarcina acetivorans (strain ATCC 35395 / DSM 2834 / JCM 12185 / C2A)).